A 352-amino-acid polypeptide reads, in one-letter code: DNA-directed RNA polymerase subunit alpha (352 aa).

The interval 1–226 (MLISQRPTLT…ELFGLARELN (226 aa)) is alpha N-terminal domain (alpha-NTD). The segment at 243 to 352 (HIASFGLPIE…EQDYAETEQL (110 aa)) is alpha C-terminal domain (alpha-CTD). A disordered region spans residues 324–352 (DASTGTWSDSGTFSDNDGGEQDYAETEQL). The span at 326 to 338 (STGTWSDSGTFSD) shows a compositional bias: polar residues. Positions 340 to 352 (DGGEQDYAETEQL) are enriched in acidic residues.

The protein belongs to the RNA polymerase alpha chain family. In terms of assembly, homodimer. The RNAP catalytic core consists of 2 alpha, 1 beta, 1 beta' and 1 omega subunit. When a sigma factor is associated with the core the holoenzyme is formed, which can initiate transcription.

It carries out the reaction RNA(n) + a ribonucleoside 5'-triphosphate = RNA(n+1) + diphosphate. Its function is as follows. DNA-dependent RNA polymerase catalyzes the transcription of DNA into RNA using the four ribonucleoside triphosphates as substrates. This chain is DNA-directed RNA polymerase subunit alpha, found in Nocardia farcinica (strain IFM 10152).